The following is a 275-amino-acid chain: 2,3,4,5-tetrahydropyridine-2,6-dicarboxylate N-succinyltransferase (275 aa).

Substrate is bound by residues R106 and D143.

This sequence belongs to the transferase hexapeptide repeat family. As to quaternary structure, homotrimer.

Its subcellular location is the cytoplasm. It catalyses the reaction (S)-2,3,4,5-tetrahydrodipicolinate + succinyl-CoA + H2O = (S)-2-succinylamino-6-oxoheptanedioate + CoA. It participates in amino-acid biosynthesis; L-lysine biosynthesis via DAP pathway; LL-2,6-diaminopimelate from (S)-tetrahydrodipicolinate (succinylase route): step 1/3. The protein is 2,3,4,5-tetrahydropyridine-2,6-dicarboxylate N-succinyltransferase of Cupriavidus necator (strain ATCC 17699 / DSM 428 / KCTC 22496 / NCIMB 10442 / H16 / Stanier 337) (Ralstonia eutropha).